The following is a 328-amino-acid chain: D-cysteine desulfhydrase (328 aa).

The residue at position 51 (K51) is an N6-(pyridoxal phosphate)lysine.

This sequence belongs to the ACC deaminase/D-cysteine desulfhydrase family. As to quaternary structure, homodimer. Pyridoxal 5'-phosphate serves as cofactor.

The enzyme catalyses D-cysteine + H2O = hydrogen sulfide + pyruvate + NH4(+) + H(+). In terms of biological role, catalyzes the alpha,beta-elimination reaction of D-cysteine and of several D-cysteine derivatives. It could be a defense mechanism against D-cysteine. The protein is D-cysteine desulfhydrase of Klebsiella pneumoniae (strain 342).